The sequence spans 278 residues: uncharacterized protein (278 aa).

It localises to the cytoplasm. Its subcellular location is the nucleus. In terms of biological role, probable methyltransferase. This is an uncharacterized protein from Schizosaccharomyces pombe (strain 972 / ATCC 24843) (Fission yeast).